Consider the following 252-residue polypeptide: F-box/SPRY domain-containing protein 1 (252 aa).

One can recognise an F-box domain in the interval 1–48; that stretch reads MVDPLCNYNVLESIFSYLELNDLNRCSQVCKSWYHFLNDENSDVWRWH. The B30.2/SPRY domain maps to 58 to 250; the sequence is VKSDLLSSVT…VSMVYLGTPL (193 aa).

It belongs to the FBXO45/Fsn family. As to quaternary structure, component of an E3 ubiquitin ligase complex composed of hiw and Fsn.

It is found in the synapse. It functions in the pathway protein modification; protein ubiquitination. Functionally, required in the presynaptic motoneuron to down-regulate the levels of wnd and restrain synaptic terminal growth at the neuromuscular junction (NMJ). The chain is F-box/SPRY domain-containing protein 1 from Drosophila grimshawi (Hawaiian fruit fly).